The primary structure comprises 365 residues: MSKLKEKREKAVVGIERASKEEAIELARVQIEKAFGKGSLIKMGESPVGQGIKSMSSGSIVLDEALGIGGYPRGRIIEIFGPESSGKTTLTLQAIAEVQKEGGIAAFIDAEHALDPVYAKALGVNVAELWLSQPDTGEQALEIAEHLIRSGGVDLIVVDSVAALTPKLEIDGEMGDSQIGLQARLMSKALRKITGILSKSNTCIMFINQIRMRIGVMFGNPETTTGGNALKFYSSLRLEVRKIEQVTRSGSSDDVIGNKIRVKIVKNKVAPPFRKVELIIYFGKGISREAGILDAAIKHNLIQKTGSWYSLGDNKLGQGRESVIEYLSKEVELANNLDKRLRKIIFNNFDQENDNFIEFKEDESE.

81–88 (GPESSGKT) is a binding site for ATP.

The protein belongs to the RecA family.

It localises to the cytoplasm. Its function is as follows. Can catalyze the hydrolysis of ATP in the presence of single-stranded DNA, the ATP-dependent uptake of single-stranded DNA by duplex DNA, and the ATP-dependent hybridization of homologous single-stranded DNAs. It interacts with LexA causing its activation and leading to its autocatalytic cleavage. This Borreliella burgdorferi (strain ATCC 35210 / DSM 4680 / CIP 102532 / B31) (Borrelia burgdorferi) protein is Protein RecA.